Consider the following 289-residue polypeptide: HTH-type transcriptional regulator SoxR (289 aa).

Positions 1–58 (MEIKDLQIFQKVVEYGSVSKAAKSLNYVQSYVTVRIQKLEEELQTELFHRSSRGMVLN) constitute an HTH lysR-type domain. Positions 18–37 (VSKAAKSLNYVQSYVTVRIQ) form a DNA-binding region, H-T-H motif.

This sequence belongs to the LysR transcriptional regulatory family.

Its function is as follows. Transcriptional repressor of soxA gene expression. In Arthrobacter sp. (strain TE1826), this protein is HTH-type transcriptional regulator SoxR (soxR).